Reading from the N-terminus, the 121-residue chain is Large ribosomal subunit protein bL20 (121 aa).

Belongs to the bacterial ribosomal protein bL20 family.

In terms of biological role, binds directly to 23S ribosomal RNA and is necessary for the in vitro assembly process of the 50S ribosomal subunit. It is not involved in the protein synthesizing functions of that subunit. The chain is Large ribosomal subunit protein bL20 from Koribacter versatilis (strain Ellin345).